The primary structure comprises 454 residues: Bleomycin hydrolase (454 aa).

Residue methionine 1 is modified to N-acetylmethionine. Catalysis depends on residues cysteine 73 and histidine 372. Lysine 391 carries the N6-acetyllysine modification. Asparagine 396 is an active-site residue.

The protein belongs to the peptidase C1 family. As to quaternary structure, homohexamer. Interacts with NUDT12 (via ANK repeats). Expressed at relatively higher levels in the stomach, esophagus, spleen, thymus and testis, and at lower levels in the skin, lung and skeletal muscle.

Its subcellular location is the cytoplasm. It localises to the cytoplasmic granule. The catalysed reaction is Inactivates bleomycin B2 (a cytotoxic glycometallopeptide) by hydrolysis of a carboxyamide bond of beta-aminoalanine, but also shows general aminopeptidase activity. The specificity varies somewhat with source, but amino acid arylamides of Met, Leu and Ala are preferred.. Functionally, the normal physiological role of BLM hydrolase is unknown, but it catalyzes the inactivation of the antitumor drug BLM (a glycopeptide) by hydrolyzing the carboxamide bond of its B-aminoalaninamide moiety thus protecting normal and malignant cells from BLM toxicity. Binds single-stranded DNA with higher affinity than double-stranded DNA. May play an important role in the metabolism of antibiotics. This chain is Bleomycin hydrolase (Blmh), found in Rattus norvegicus (Rat).